Consider the following 53-residue polypeptide: UPF0391 membrane protein BamMC406_6344 (53 aa).

A run of 2 helical transmembrane segments spans residues 5-25 (AIIF…GIAA) and 30-50 (IAKI…LLGV).

It belongs to the UPF0391 family.

It is found in the cell membrane. This chain is UPF0391 membrane protein BamMC406_6344, found in Burkholderia ambifaria (strain MC40-6).